Here is a 369-residue protein sequence, read N- to C-terminus: Anhydro-N-acetylmuramic acid kinase (369 aa).

12-19 (GTSLDGVD) is a binding site for ATP.

The protein belongs to the anhydro-N-acetylmuramic acid kinase family.

It carries out the reaction 1,6-anhydro-N-acetyl-beta-muramate + ATP + H2O = N-acetyl-D-muramate 6-phosphate + ADP + H(+). The protein operates within amino-sugar metabolism; 1,6-anhydro-N-acetylmuramate degradation. It participates in cell wall biogenesis; peptidoglycan recycling. In terms of biological role, catalyzes the specific phosphorylation of 1,6-anhydro-N-acetylmuramic acid (anhMurNAc) with the simultaneous cleavage of the 1,6-anhydro ring, generating MurNAc-6-P. Is required for the utilization of anhMurNAc either imported from the medium or derived from its own cell wall murein, and thus plays a role in cell wall recycling. This chain is Anhydro-N-acetylmuramic acid kinase, found in Escherichia coli O45:K1 (strain S88 / ExPEC).